The primary structure comprises 501 residues: Glycosyltransferase family 92 protein F13G3.3 (501 aa).

The helical transmembrane segment at 10–30 (LSVVLLFSFLFFVTAVLLQFI) threads the bilayer. In terms of domain architecture, GT92 spans 151-439 (KPVVMCISPL…ISDCYKQSYY (289 aa)).

This sequence belongs to the glycosyltransferase 92 family.

The protein localises to the membrane. The sequence is that of Glycosyltransferase family 92 protein F13G3.3 from Caenorhabditis elegans.